A 50-amino-acid chain; its full sequence is Cuticle protein CP498 (50 aa).

2 tandem repeats follow at residues 6–23 (ATVG…LIQL) and 30–47 (ILEG…FVTY).

Calcified shell.

This is Cuticle protein CP498 from Cancer pagurus (Rock crab).